A 428-amino-acid chain; its full sequence is MYPKKTHWTAEITPNLHGTEVVVAGWVWELRDIGRVKFVVVRDREGFVQVTLKAGKTPDHLFKVFAELSREDVVVIKGIVEASKIAKSGVEIFPSEIWILNKAKPLPIDIWSETPDLATRLKWRSVDLKRPRNLVVFTVASAMLRSIREVLYGEGFVEVFTPKIIVTSTEGGAELFPVMYFERVAYLSQSPQLYKEQLTASLERVFEIGPAYRAEKHNTDYHLNEFISVDAEAAFMDYNDIMDILEKIMRRLASTVSEYAPKLEEVGIKALMELSNIPRVDYDEAVDRLRQLGYAVNWGDDFTVEMQKALMKYYGPVYFIVNFPASLRPFYTKRKDGEKSESYDLIINGIEVASGATRIHKRDELEEEMKKRGLDPRLFESHLSVFDYGMPPHAGFGLGFNRLVTALLGLDNVRHATLYPRDRYRVEP.

Residue Glu170 coordinates L-aspartate. Residues 192–195 (QLYK) form an aspartate region. L-aspartate is bound at residue Arg213. ATP is bound by residues 213 to 215 (RAE) and Glu351. Residues Glu351 and Ser354 each contribute to the Mg(2+) site. L-aspartate contacts are provided by Ser354 and Arg358. 399–402 (GFNR) is an ATP binding site.

It belongs to the class-II aminoacyl-tRNA synthetase family. Type 2 subfamily. In terms of assembly, homodimer. It depends on Mg(2+) as a cofactor.

The protein localises to the cytoplasm. It carries out the reaction tRNA(Asp) + L-aspartate + ATP = L-aspartyl-tRNA(Asp) + AMP + diphosphate. Functionally, catalyzes the attachment of L-aspartate to tRNA(Asp) in a two-step reaction: L-aspartate is first activated by ATP to form Asp-AMP and then transferred to the acceptor end of tRNA(Asp). In Pyrobaculum aerophilum (strain ATCC 51768 / DSM 7523 / JCM 9630 / CIP 104966 / NBRC 100827 / IM2), this protein is Aspartate--tRNA(Asp) ligase.